The sequence spans 250 residues: 5-oxoprolinase subunit A (250 aa).

It belongs to the LamB/PxpA family. As to quaternary structure, forms a complex composed of PxpA, PxpB and PxpC.

It catalyses the reaction 5-oxo-L-proline + ATP + 2 H2O = L-glutamate + ADP + phosphate + H(+). Its function is as follows. Catalyzes the cleavage of 5-oxoproline to form L-glutamate coupled to the hydrolysis of ATP to ADP and inorganic phosphate. In Staphylococcus aureus (strain Mu3 / ATCC 700698), this protein is 5-oxoprolinase subunit A.